The primary structure comprises 315 residues: 6-phosphogluconolactonase-like protein 2 (315 aa).

A phosphoserine mark is found at Ser42 and Ser64. The tract at residues 59-85 (CKSTASAAEGKSGSSGSGSGSSKPKKE) is disordered. Over residues 60–70 (KSTASAAEGKS) the composition is skewed to low complexity.

This sequence belongs to the glucosamine/galactosamine-6-phosphate isomerase family. 6-phosphogluconolactonase subfamily.

Its subcellular location is the cytoplasm. In terms of biological role, may be involved in regulation of tRNA subcellular distribution. The chain is 6-phosphogluconolactonase-like protein 2 (SOL2) from Saccharomyces cerevisiae (strain ATCC 204508 / S288c) (Baker's yeast).